A 242-amino-acid chain; its full sequence is tRNA (guanine-N(1)-)-methyltransferase (242 aa).

Residues glycine 115 and 134 to 139 contribute to the S-adenosyl-L-methionine site; that span reads LGDFVL. Residues 210–224 are compositionally biased toward basic and acidic residues; the sequence is QEQREQRTAARRPDL. Residues 210-242 are disordered; the sequence is QEQREQRTAARRPDLMQRWQQRFGADNDSEHRA.

The protein belongs to the RNA methyltransferase TrmD family. As to quaternary structure, homodimer.

Its subcellular location is the cytoplasm. The catalysed reaction is guanosine(37) in tRNA + S-adenosyl-L-methionine = N(1)-methylguanosine(37) in tRNA + S-adenosyl-L-homocysteine + H(+). In terms of biological role, specifically methylates guanosine-37 in various tRNAs. The polypeptide is tRNA (guanine-N(1)-)-methyltransferase (Synechococcus sp. (strain WH7803)).